We begin with the raw amino-acid sequence, 453 residues long: Homogentisate 1,2-dioxygenase (453 aa).

His306 acts as the Proton acceptor in catalysis. Fe cation is bound by residues His349 and Glu355. Homogentisate-binding residues include Tyr364 and His385. His385 contributes to the Fe cation binding site.

This sequence belongs to the homogentisate dioxygenase family. As to quaternary structure, hexamer; dimer of trimers. Requires Fe cation as cofactor.

It catalyses the reaction homogentisate + O2 = 4-maleylacetoacetate + H(+). It functions in the pathway amino-acid degradation; L-phenylalanine degradation; acetoacetate and fumarate from L-phenylalanine: step 4/6. Functionally, involved in the catabolism of homogentisate (2,5-dihydroxyphenylacetate or 2,5-OH-PhAc), a central intermediate in the degradation of phenylalanine and tyrosine. Catalyzes the oxidative ring cleavage of the aromatic ring of homogentisate to yield maleylacetoacetate. This Rhizobium rhizogenes (strain K84 / ATCC BAA-868) (Agrobacterium radiobacter) protein is Homogentisate 1,2-dioxygenase.